A 530-amino-acid polypeptide reads, in one-letter code: Feruloyl esterase C (530 aa).

Residues 1–25 form the signal peptide; it reads MMLTSAILLLTLGVQLSHADDSSRE. Disulfide bonds link Cys31–Cys78, Cys66–Cys117, Cys190–Cys444, Cys259–Cys276, Cys285–Cys294, and Cys506–Cys528. Ser191 acts as the Acyl-ester intermediate in catalysis. The Ca(2+) site is built by Asp260, Asp263, Ala265, Asp267, and Val269. Catalysis depends on charge relay system residues Asp403 and His443.

The protein belongs to the tannase family.

It is found in the secreted. The enzyme catalyses feruloyl-polysaccharide + H2O = ferulate + polysaccharide.. Functionally, involved in degradation of plant cell walls. Hydrolyzes the feruloyl-arabinose ester bond in arabinoxylans as well as the feruloyl-galactose and feruloyl-arabinose ester bonds in pectin. Active against methyl esters of sinapate (MSA) and caffeate (MCA). The polypeptide is Feruloyl esterase C (faeC) (Talaromyces stipitatus (strain ATCC 10500 / CBS 375.48 / QM 6759 / NRRL 1006) (Penicillium stipitatum)).